A 361-amino-acid polypeptide reads, in one-letter code: Sensor protein VanSC (361 aa).

2 consecutive transmembrane segments (helical) span residues 16–36 (FVTTGILLAFLVMIPLVIRFI) and 59–79 (WLFCVAIGALLIWFGTTIYYM). Residues 144–359 (YLAHDLRTPL…IFNVRLPKPA (216 aa)) enclose the Histidine kinase domain. H147 bears the Phosphohistidine; by autocatalysis mark. Residue E252 coordinates Mg(2+).

Autophosphorylated.

It is found in the membrane. The enzyme catalyses ATP + protein L-histidine = ADP + protein N-phospho-L-histidine.. This chain is Sensor protein VanSC, found in Enterococcus gallinarum.